We begin with the raw amino-acid sequence, 253 residues long: Triosephosphate isomerase (253 aa).

9–11 is a binding site for substrate; it reads NWK. Histidine 96 acts as the Electrophile in catalysis. Glutamate 169 (proton acceptor) is an active-site residue. Residues glycine 175, serine 215, and 236 to 237 contribute to the substrate site; that span reads GG.

This sequence belongs to the triosephosphate isomerase family. Homodimer.

The protein resides in the cytoplasm. The catalysed reaction is D-glyceraldehyde 3-phosphate = dihydroxyacetone phosphate. It functions in the pathway carbohydrate biosynthesis; gluconeogenesis. It participates in carbohydrate degradation; glycolysis; D-glyceraldehyde 3-phosphate from glycerone phosphate: step 1/1. Its function is as follows. Involved in the gluconeogenesis. Catalyzes stereospecifically the conversion of dihydroxyacetone phosphate (DHAP) to D-glyceraldehyde-3-phosphate (G3P). In Borrelia garinii subsp. bavariensis (strain ATCC BAA-2496 / DSM 23469 / PBi) (Borreliella bavariensis), this protein is Triosephosphate isomerase.